Here is a 38-residue protein sequence, read N- to C-terminus: Photosystem II reaction center protein L (38 aa).

A helical transmembrane segment spans residues serine 17–phenylalanine 37.

It belongs to the PsbL family. PSII is composed of 1 copy each of membrane proteins PsbA, PsbB, PsbC, PsbD, PsbE, PsbF, PsbH, PsbI, PsbJ, PsbK, PsbL, PsbM, PsbT, PsbX, PsbY, PsbZ, Psb30/Ycf12, at least 3 peripheral proteins of the oxygen-evolving complex and a large number of cofactors. It forms dimeric complexes.

The protein resides in the plastid. It is found in the chloroplast thylakoid membrane. In terms of biological role, one of the components of the core complex of photosystem II (PSII). PSII is a light-driven water:plastoquinone oxidoreductase that uses light energy to abstract electrons from H(2)O, generating O(2) and a proton gradient subsequently used for ATP formation. It consists of a core antenna complex that captures photons, and an electron transfer chain that converts photonic excitation into a charge separation. This subunit is found at the monomer-monomer interface and is required for correct PSII assembly and/or dimerization. The chain is Photosystem II reaction center protein L from Ephedra sinica (Chinese ephedra).